Reading from the N-terminus, the 510-residue chain is ATP synthase subunit alpha (510 aa).

An ATP-binding site is contributed by 169-176 (GDRQTGKT).

This sequence belongs to the ATPase alpha/beta chains family. F-type ATPases have 2 components, CF(1) - the catalytic core - and CF(0) - the membrane proton channel. CF(1) has five subunits: alpha(3), beta(3), gamma(1), delta(1), epsilon(1). CF(0) has three main subunits: a(1), b(2) and c(9-12). The alpha and beta chains form an alternating ring which encloses part of the gamma chain. CF(1) is attached to CF(0) by a central stalk formed by the gamma and epsilon chains, while a peripheral stalk is formed by the delta and b chains.

It localises to the cell inner membrane. It catalyses the reaction ATP + H2O + 4 H(+)(in) = ADP + phosphate + 5 H(+)(out). Its function is as follows. Produces ATP from ADP in the presence of a proton gradient across the membrane. The alpha chain is a regulatory subunit. This Methylobacterium radiotolerans (strain ATCC 27329 / DSM 1819 / JCM 2831 / NBRC 15690 / NCIMB 10815 / 0-1) protein is ATP synthase subunit alpha.